The following is a 225-amino-acid chain: Uracil-DNA glycosylase (225 aa).

The Proton acceptor role is filled by aspartate 68.

It belongs to the uracil-DNA glycosylase (UDG) superfamily. UNG family.

Its subcellular location is the cytoplasm. The enzyme catalyses Hydrolyzes single-stranded DNA or mismatched double-stranded DNA and polynucleotides, releasing free uracil.. In terms of biological role, excises uracil residues from the DNA which can arise as a result of misincorporation of dUMP residues by DNA polymerase or due to deamination of cytosine. The polypeptide is Uracil-DNA glycosylase (Mycolicibacterium gilvum (strain PYR-GCK) (Mycobacterium gilvum (strain PYR-GCK))).